Reading from the N-terminus, the 231-residue chain is MNYEVVIPAAGQGKRMNAGKNKLFIEAKGIPVIIHTLKVFENHDACKRIILVINEQEFGEFNTLLKTYHFKTPIEMVPGGRERQQSVFAGIKAAGKEETVLVHDGARPFIKREYIEQLVEKAKETGAAIVAVPVKDTIKRVQDGEIAGTIERSSLWAAQTPQAFRLSILMNAHLEAEAKGFLGTDDASLVEEAGGTVAIIQGDYQNIKLTTPDDLLVAEAILEAEKRNEHV.

Belongs to the IspD/TarI cytidylyltransferase family. IspD subfamily.

The catalysed reaction is 2-C-methyl-D-erythritol 4-phosphate + CTP + H(+) = 4-CDP-2-C-methyl-D-erythritol + diphosphate. It functions in the pathway isoprenoid biosynthesis; isopentenyl diphosphate biosynthesis via DXP pathway; isopentenyl diphosphate from 1-deoxy-D-xylulose 5-phosphate: step 2/6. Catalyzes the formation of 4-diphosphocytidyl-2-C-methyl-D-erythritol from CTP and 2-C-methyl-D-erythritol 4-phosphate (MEP). The chain is 2-C-methyl-D-erythritol 4-phosphate cytidylyltransferase from Bacillus licheniformis (strain ATCC 14580 / DSM 13 / JCM 2505 / CCUG 7422 / NBRC 12200 / NCIMB 9375 / NCTC 10341 / NRRL NRS-1264 / Gibson 46).